The following is a 388-amino-acid chain: MRYLTSGESHGPQLTVIVEGVPANLEVKVEDINKEMFKRQGGYGRGRRMQIEKDTVEIVSGVRNGYTLGSPITMVVTNDDFTHWRKIMGRAPISDEERENMKRTITKPRPGHADLLGGMKYNHRDLRNVLERSSARETAARVAVGALCKVLLEQLDIEIYSRVVEIGGIKDKDFYDSETFKANLDRNDVRVIDDGIAQAMRDKIDEAKTDGDSIGGVVQVVVENMPVGVGSYVHYDRKLDGRIAQGVVSINAFKGVSFGEGFKAAEKPGSEIQDEILYNTELGYYRGSNHLGGLEGGMSNGMPIIVNGVMKPIPTLYKPLNSVDINTKEDFKATIERSDSCAVPAASIVCEHVVAFAIAKALLEEFQSNHIEQLKQQIIERRQLNIEF.

2 residues coordinate NADP(+): R39 and R45. FMN is bound by residues R132 to S134, N251 to A252, G296, K311 to T315, and R337.

In terms of assembly, homotetramer. FMNH2 is required as a cofactor.

The enzyme catalyses 5-O-(1-carboxyvinyl)-3-phosphoshikimate = chorismate + phosphate. It functions in the pathway metabolic intermediate biosynthesis; chorismate biosynthesis; chorismate from D-erythrose 4-phosphate and phosphoenolpyruvate: step 7/7. Functionally, catalyzes the anti-1,4-elimination of the C-3 phosphate and the C-6 proR hydrogen from 5-enolpyruvylshikimate-3-phosphate (EPSP) to yield chorismate, which is the branch point compound that serves as the starting substrate for the three terminal pathways of aromatic amino acid biosynthesis. This reaction introduces a second double bond into the aromatic ring system. This is Chorismate synthase from Staphylococcus aureus.